A 67-amino-acid chain; its full sequence is Potassium channel toxin alpha-KTx (67 aa).

The signal sequence occupies residues 1 to 25 (MKNIAMKTTVVLTILLLSVLTAINA). Residues 26–31 (DTMKKR) constitute a propeptide that is removed on maturation. Disulfide bonds link Cys-35–Cys-54, Cys-40–Cys-59, Cys-44–Cys-61, and Cys-49–Cys-64.

It belongs to the short scorpion toxin superfamily. Potassium channel inhibitor family. As to expression, expressed by the venom gland.

The protein localises to the secreted. Its function is as follows. Blocks Kv1.1/KCNA1, Kv1.2/KCNA2 and Kv1.3/KCNA3 voltage-gated potassium channels. In Hoffmannihadrurus gertschi (Scorpion), this protein is Potassium channel toxin alpha-KTx.